Reading from the N-terminus, the 142-residue chain is Hemoglobin subunit alpha-A (142 aa).

A Globin domain is found at 2 to 142 (VLSAADKTNV…VGAVLTAKYR (141 aa)). His-59 contacts O2. Heme b is bound at residue His-88.

The protein belongs to the globin family. As to quaternary structure, heterotetramer of two alpha chains and two beta chains. Red blood cells.

Its function is as follows. Involved in oxygen transport from the lung to the various peripheral tissues. The protein is Hemoglobin subunit alpha-A (HBAA) of Cairina moschata (Muscovy duck).